Here is a 131-residue protein sequence, read N- to C-terminus: uncharacterized protein (131 aa).

This is an uncharacterized protein from Methanocaldococcus jannaschii (strain ATCC 43067 / DSM 2661 / JAL-1 / JCM 10045 / NBRC 100440) (Methanococcus jannaschii).